A 231-amino-acid chain; its full sequence is Ribonuclease 3 (231 aa).

Residues 7–135 (IQAIESKLNF…ILGAVYLDGG (129 aa)) form the RNase III domain. Glutamate 48 is a binding site for Mg(2+). Aspartate 52 is a catalytic residue. The Mg(2+) site is built by asparagine 121 and glutamate 124. Residue glutamate 124 is part of the active site. The DRBM domain occupies 160–229 (NPKNRLQQFT…AKQALSTHDN (70 aa)).

Belongs to the ribonuclease III family. Homodimer. It depends on Mg(2+) as a cofactor.

Its subcellular location is the cytoplasm. The catalysed reaction is Endonucleolytic cleavage to 5'-phosphomonoester.. Digests double-stranded RNA. Involved in the processing of primary rRNA transcript to yield the immediate precursors to the large and small rRNAs (23S and 16S). Processes some mRNAs, and tRNAs when they are encoded in the rRNA operon. Processes pre-crRNA and tracrRNA of type II CRISPR loci if present in the organism. In Chlamydia trachomatis serovar L2 (strain ATCC VR-902B / DSM 19102 / 434/Bu), this protein is Ribonuclease 3.